A 242-amino-acid chain; its full sequence is Platelet-derived growth factor subunit B (242 aa).

An N-terminal signal peptide occupies residues 1-20 (MNRCWALFLSLCCYLRLVSA). The propeptide at 21-81 (EGDPIPEELY…ELESLSRGRR (61 aa)) is removed in mature form. N63 is a glycosylation site (N-linked (GlcNAc...) asparagine). Disulfide bonds link C97–C141, C130–C178, and C134–C180. The segment covering 219–232 (PPKGKHRKFKHTHD) has biased composition (basic residues). The interval 219–242 (PPKGKHRKFKHTHDKKALKETLGA) is disordered. Basic and acidic residues predominate over residues 233–242 (KKALKETLGA).

It belongs to the PDGF/VEGF growth factor family. In terms of assembly, antiparallel homodimer; disulfide-linked. Antiparallel heterodimer with PDGFA; disulfide-linked. The PDGFB homodimer interacts with PDGFRA and PDGFRB homodimers, and with heterodimers formed by PDGFRA and PDGFRB. The heterodimer composed of PDGFA and PDGFB interacts with PDGFRB homodimers, and with heterodimers formed by PDGFRA and PDGFRB. Interacts with XLKD1. Interacts with LRP1. Interacts with SORL1 (via the N-terminal ectodomain). Interacts with CD82; this interaction inhibits PDGFB-mediated signaling pathway.

It localises to the secreted. Its function is as follows. Growth factor that plays an essential role in the regulation of embryonic development, cell proliferation, cell migration, survival and chemotaxis. Potent mitogen for cells of mesenchymal origin. Required for normal proliferation and recruitment of pericytes and vascular smooth muscle cells in the central nervous system, skin, lung, heart and placenta. Required for normal blood vessel development, and for normal development of kidney glomeruli. Plays an important role in wound healing. Signaling is modulated by the formation of heterodimers with PDGFA. This is Platelet-derived growth factor subunit B (PDGFB) from Canis lupus familiaris (Dog).